Here is a 547-residue protein sequence, read N- to C-terminus: MAAKDVKFGNDARVKMLKGVNVLADAVKVTLGPKGRNVVLDKAYGAPTITKDGVSVAREIELEDKFENMGAQMVKEVASKANDAAGDGTTTATVLAQAIVNEGLKAVAAGMNPMDLKRGIDKAVVAVVEELKAISKPCETSKEIEQVGTISANSDETVGKLIAQAMEKVGKEGVITVEDGTGLDDALDVVEGMQFDRGYLSPYFINKPEAGTVELENPYIILVDKKISNIREILPVLEAVAKAGKPLLIVAEDIEGEALATLVVNTMRGIVKVAAVKAPGFGDRRKAMLQDIAILTAGTVISEEIGMELEKATLEELGQAKRVVITKDNTTIIDGIGDEAQIKARVAQIRQQIEDSTSDYDKEKLQERVAKLAGGVAVIKVGAATEVAMKEKKDRVDDALHATRAAVEEGIVPGGGVALVRAASKVATTLTGDNEEQNVGIKLALRAMEAPLRQIVTNAGEEASVVARNVKDGNGNYGYNAGTEQYGDMLEMGILDPTKVTRSALQFAASIAGLMITTECMITDLPKEEKLDPAAAMGGMGGMGGMM.

Residues 30–33 (TLGP), lysine 51, 87–91 (DGTTT), glycine 415, and aspartate 496 contribute to the ATP site.

This sequence belongs to the chaperonin (HSP60) family. As to quaternary structure, forms a cylinder of 14 subunits composed of two heptameric rings stacked back-to-back. Interacts with the co-chaperonin GroES.

Its subcellular location is the cytoplasm. The catalysed reaction is ATP + H2O + a folded polypeptide = ADP + phosphate + an unfolded polypeptide.. Its function is as follows. Together with its co-chaperonin GroES, plays an essential role in assisting protein folding. The GroEL-GroES system forms a nano-cage that allows encapsulation of the non-native substrate proteins and provides a physical environment optimized to promote and accelerate protein folding. This chain is Chaperonin GroEL, found in Actinobacillus pleuropneumoniae serotype 7 (strain AP76).